The chain runs to 130 residues: Small ribosomal subunit protein uS8 (130 aa).

The protein belongs to the universal ribosomal protein uS8 family. In terms of assembly, part of the 30S ribosomal subunit. Contacts proteins S5 and S12.

In terms of biological role, one of the primary rRNA binding proteins, it binds directly to 16S rRNA central domain where it helps coordinate assembly of the platform of the 30S subunit. This Wigglesworthia glossinidia brevipalpis protein is Small ribosomal subunit protein uS8.